Here is a 72-residue protein sequence, read N- to C-terminus: N-alpha-acetyltransferase 38, NatC auxiliary subunit (72 aa).

The Sm domain occupies 3 to 72; the sequence is NGEILLTSWL…KHIKSFSVRA (70 aa).

As to quaternary structure, component of the N-terminal acetyltransferase C (NatC) complex, composed of the catalytic subunit Naa30, a large auxiliary subunit Naa35 and a small auxiliary subunit Naa38.

It localises to the endoplasmic reticulum. Its function is as follows. Component of the NatC N-terminal acetyltransferase, which associates with the ribosome to acetylate nascent protein chains in a cotranslational manner. NatC acetylates protein N-termini starting with methionine, followed by a hydrophobic or amphipathic amino acid, with amino acids at positions 3 and 4 also contributing to NatC recognition. The first 4 amino acids of cognate substrates are recognized at the Naa30-Naa35 interface. NatC-dependent acetylation targets various substrate proteins to specific subcellular sites. The polypeptide is N-alpha-acetyltransferase 38, NatC auxiliary subunit (naa38) (Schizosaccharomyces pombe (strain 972 / ATCC 24843) (Fission yeast)).